Here is a 266-residue protein sequence, read N- to C-terminus: Elongator complex protein 6 (266 aa).

It belongs to the ELP6 family. Component of the elongator complex which consists of ELP1, ELP2, ELP3, ELP4, ELP5 and ELP6.

The protein localises to the cytoplasm. It is found in the nucleus. It participates in tRNA modification; 5-methoxycarbonylmethyl-2-thiouridine-tRNA biosynthesis. Component of the elongator complex which is required for multiple tRNA modifications, including mcm5U (5-methoxycarbonylmethyl uridine), mcm5s2U (5-methoxycarbonylmethyl-2-thiouridine), and ncm5U (5-carbamoylmethyl uridine). The elongator complex catalyzes formation of carboxymethyluridine in the wobble base at position 34 in tRNAs. Involved in cell migration. The chain is Elongator complex protein 6 (Elp6) from Rattus norvegicus (Rat).